We begin with the raw amino-acid sequence, 462 residues long: Nuclear factor interleukin-3-regulated protein (462 aa).

Lys-24 participates in a covalent cross-link: Glycyl lysine isopeptide (Lys-Gly) (interchain with G-Cter in SUMO2). The 64-residue stretch at 73–136 (DAMYWEKRRK…GLISSTAYAQ (64 aa)) folds into the bZIP domain. Residues 79-95 (KRRKNNEAAKRSREKRR) form a basic motif region. The interval 99–106 (LVLENKLI) is leucine-zipper. Disordered stretches follow at residues 189 to 236 (DVSE…RDDR) and 254 to 303 (GYSH…HSPV). Lys-214 participates in a covalent cross-link: Glycyl lysine isopeptide (Lys-Gly) (interchain with G-Cter in SUMO2). Residue Lys-219 forms a Glycyl lysine isopeptide (Lys-Gly) (interchain with G-Cter in SUMO1); alternate linkage. Lys-219 participates in a covalent cross-link: Glycyl lysine isopeptide (Lys-Gly) (interchain with G-Cter in SUMO2); alternate. Residues 227–236 (SYAREPRDDR) are compositionally biased toward basic and acidic residues. Polar residues predominate over residues 264–274 (VNRSSSNSPRT). Ser-301 carries the phosphoserine modification. Glycyl lysine isopeptide (Lys-Gly) (interchain with G-Cter in SUMO2) cross-links involve residues Lys-314, Lys-326, Lys-332, Lys-337, and Lys-350. Ser-353 is subject to Phosphoserine. Glycyl lysine isopeptide (Lys-Gly) (interchain with G-Cter in SUMO2) cross-links involve residues Lys-360, Lys-394, Lys-401, Lys-406, Lys-412, Lys-419, Lys-424, Lys-434, and Lys-448.

This sequence belongs to the bZIP family. NFIL3 subfamily. In terms of assembly, homodimer. Binds DNA as a dimer. Interacts with CRY2, DR1 and PER2. Interacts with NR0B2. Interacts with MYSM1.

Its subcellular location is the nucleus. In terms of biological role, acts as a transcriptional regulator that recognizes and binds to the sequence 5'-[GA]TTA[CT]GTAA[CT]-3', a sequence present in many cellular and viral promoters. Represses transcription from promoters with activating transcription factor (ATF) sites. Represses promoter activity in osteoblasts. Represses transcriptional activity of PER1. Represses transcriptional activity of PER2 via the B-site on the promoter. Activates transcription from the interleukin-3 promoter in T-cells. Competes for the same consensus-binding site with PAR DNA-binding factors (DBP, HLF and TEF). Component of the circadian clock that acts as a negative regulator for the circadian expression of PER2 oscillation in the cell-autonomous core clock. Protects pro-B cells from programmed cell death. Represses the transcription of CYP2A5. Positively regulates the expression and activity of CES2 by antagonizing the repressive action of NR1D1 on CES2. Required for the development of natural killer cell precursors. The sequence is that of Nuclear factor interleukin-3-regulated protein (NFIL3) from Bos taurus (Bovine).